We begin with the raw amino-acid sequence, 657 residues long: Methionine--tRNA ligase (657 aa).

A 'HIGH' region motif is present at residues Tyr-13–His-23. Positions Lys-308 to Ser-312 match the 'KMSKS' region motif. Lys-311 is an ATP binding site. The 101-residue stretch at Asp-557–Lys-657 folds into the tRNA-binding domain.

Belongs to the class-I aminoacyl-tRNA synthetase family. MetG type 2B subfamily. As to quaternary structure, homodimer.

The protein resides in the cytoplasm. It carries out the reaction tRNA(Met) + L-methionine + ATP = L-methionyl-tRNA(Met) + AMP + diphosphate. Is required not only for elongation of protein synthesis but also for the initiation of all mRNA translation through initiator tRNA(fMet) aminoacylation. This chain is Methionine--tRNA ligase, found in Staphylococcus aureus (strain MW2).